A 279-amino-acid polypeptide reads, in one-letter code: Putative colanic acid biosynthesis glycosyl transferase WcaA (279 aa).

This sequence to R.meliloti ExoO.

The protein operates within slime biogenesis; slime polysaccharide biosynthesis. In Escherichia coli (strain K12), this protein is Putative colanic acid biosynthesis glycosyl transferase WcaA (wcaA).